Reading from the N-terminus, the 275-residue chain is 2-C-methyl-D-erythritol 4-phosphate cytidylyltransferase (275 aa).

Belongs to the IspD/TarI cytidylyltransferase family. IspD subfamily.

The catalysed reaction is 2-C-methyl-D-erythritol 4-phosphate + CTP + H(+) = 4-CDP-2-C-methyl-D-erythritol + diphosphate. It participates in isoprenoid biosynthesis; isopentenyl diphosphate biosynthesis via DXP pathway; isopentenyl diphosphate from 1-deoxy-D-xylulose 5-phosphate: step 2/6. Functionally, catalyzes the formation of 4-diphosphocytidyl-2-C-methyl-D-erythritol from CTP and 2-C-methyl-D-erythritol 4-phosphate (MEP). The chain is 2-C-methyl-D-erythritol 4-phosphate cytidylyltransferase from Corynebacterium jeikeium (strain K411).